The following is a 411-amino-acid chain: Protein Rv3035 (411 aa).

The polypeptide is Protein Rv3035 (Mycobacterium tuberculosis (strain ATCC 25618 / H37Rv)).